The chain runs to 131 residues: Phosphoribosyl-AMP cyclohydrolase (131 aa).

D82 lines the Mg(2+) pocket. C83 lines the Zn(2+) pocket. Mg(2+)-binding residues include D84 and D86. Residues C99 and C106 each coordinate Zn(2+).

Belongs to the PRA-CH family. In terms of assembly, homodimer. Requires Mg(2+) as cofactor. Zn(2+) is required as a cofactor.

Its subcellular location is the cytoplasm. The enzyme catalyses 1-(5-phospho-beta-D-ribosyl)-5'-AMP + H2O = 1-(5-phospho-beta-D-ribosyl)-5-[(5-phospho-beta-D-ribosylamino)methylideneamino]imidazole-4-carboxamide. The protein operates within amino-acid biosynthesis; L-histidine biosynthesis; L-histidine from 5-phospho-alpha-D-ribose 1-diphosphate: step 3/9. In terms of biological role, catalyzes the hydrolysis of the adenine ring of phosphoribosyl-AMP. In Methanospirillum hungatei JF-1 (strain ATCC 27890 / DSM 864 / NBRC 100397 / JF-1), this protein is Phosphoribosyl-AMP cyclohydrolase.